The following is a 383-amino-acid chain: Putative glutamate--cysteine ligase 2-2 (383 aa).

It belongs to the glutamate--cysteine ligase type 2 family. YbdK subfamily.

The enzyme catalyses L-cysteine + L-glutamate + ATP = gamma-L-glutamyl-L-cysteine + ADP + phosphate + H(+). ATP-dependent carboxylate-amine ligase which exhibits weak glutamate--cysteine ligase activity. The chain is Putative glutamate--cysteine ligase 2-2 from Paenarthrobacter aurescens (strain TC1).